Consider the following 399-residue polypeptide: Semaphorin-like protein 139 (399 aa).

A signal peptide spans 1–14 (MIPLLFILFYFTNC). The 385-residue stretch at 15–399 (IEWHKFETSE…IPRMKKILKM (385 aa)) folds into the Sema domain.

The protein belongs to the semaphorin family. As to quaternary structure, interacts with host VESPR.

It is found in the secreted. Acts as a semaphorin-like protein and binds to host plexin C1 receptor. May alter the movement of plexin C1-expressing cells including dendritic cells, monocytes, or granulocytes in the proximity of infected cells. May also regulate host cell cytoskeleton of neighboring cells to improve viral infection. This is Semaphorin-like protein 139 (EVM139) from Ectromelia virus (strain Moscow) (ECTV).